The chain runs to 266 residues: Small ribosomal subunit protein mS42 (266 aa).

This sequence belongs to the mitochondrion-specific ribosomal protein mS42 family. In terms of assembly, component of the mitochondrial small ribosomal subunit (mt-SSU). Mature yeast 74S mitochondrial ribosomes consist of a small (37S) and a large (54S) subunit. The 37S small subunit contains a 15S ribosomal RNA (15S mt-rRNA) and 34 different proteins. The 54S large subunit contains a 21S rRNA (21S mt-rRNA) and 46 different proteins. mS42 forms a heterodimer with mS43, building a large protuberance adjacent to the mRNA channel exit in the mt-SSU body.

It localises to the mitochondrion. In terms of biological role, component of the mitochondrial ribosome (mitoribosome), a dedicated translation machinery responsible for the synthesis of mitochondrial genome-encoded proteins, including at least some of the essential transmembrane subunits of the mitochondrial respiratory chain. The mitoribosomes are attached to the mitochondrial inner membrane and translation products are cotranslationally integrated into the membrane. This Saccharomyces cerevisiae (strain ATCC 204508 / S288c) (Baker's yeast) protein is Small ribosomal subunit protein mS42 (RSM26).